The chain runs to 156 residues: Transcription antitermination protein NusB (156 aa).

It belongs to the NusB family.

Involved in transcription antitermination. Required for transcription of ribosomal RNA (rRNA) genes. Binds specifically to the boxA antiterminator sequence of the ribosomal RNA (rrn) operons. This Rickettsia akari (strain Hartford) protein is Transcription antitermination protein NusB.